We begin with the raw amino-acid sequence, 172 residues long: Adenine phosphoribosyltransferase (172 aa).

It belongs to the purine/pyrimidine phosphoribosyltransferase family. As to quaternary structure, homodimer.

The protein localises to the cytoplasm. The catalysed reaction is AMP + diphosphate = 5-phospho-alpha-D-ribose 1-diphosphate + adenine. It participates in purine metabolism; AMP biosynthesis via salvage pathway; AMP from adenine: step 1/1. Functionally, catalyzes a salvage reaction resulting in the formation of AMP, that is energically less costly than de novo synthesis. In Prochlorococcus marinus (strain MIT 9303), this protein is Adenine phosphoribosyltransferase.